Here is a 349-residue protein sequence, read N- to C-terminus: Nicotinate-nucleotide--dimethylbenzimidazole phosphoribosyltransferase (349 aa).

The active-site Proton acceptor is Glu-315.

This sequence belongs to the CobT family.

The enzyme catalyses 5,6-dimethylbenzimidazole + nicotinate beta-D-ribonucleotide = alpha-ribazole 5'-phosphate + nicotinate + H(+). It participates in nucleoside biosynthesis; alpha-ribazole biosynthesis; alpha-ribazole from 5,6-dimethylbenzimidazole: step 1/2. In terms of biological role, catalyzes the synthesis of alpha-ribazole-5'-phosphate from nicotinate mononucleotide (NAMN) and 5,6-dimethylbenzimidazole (DMB). In Variovorax paradoxus (strain S110), this protein is Nicotinate-nucleotide--dimethylbenzimidazole phosphoribosyltransferase.